Consider the following 69-residue polypeptide: DNA gyrase inhibitor YacG (69 aa).

Residues Cys-14, Cys-17, Cys-33, and Cys-37 each contribute to the Zn(2+) site.

Belongs to the DNA gyrase inhibitor YacG family. Interacts with GyrB. It depends on Zn(2+) as a cofactor.

Inhibits all the catalytic activities of DNA gyrase by preventing its interaction with DNA. Acts by binding directly to the C-terminal domain of GyrB, which probably disrupts DNA binding by the gyrase. In Aliivibrio salmonicida (strain LFI1238) (Vibrio salmonicida (strain LFI1238)), this protein is DNA gyrase inhibitor YacG.